A 597-amino-acid chain; its full sequence is MREVLYMTDKKNLRTPIVCVMGHVDHGKTTLLDKIRGTAIVSGEAGAITQHIGATEVPIDVIVNKLGDPKLRDRFMVPGLLFIDTPGHHAFTTLRSRGGALADLAIVVVDINEGFKPQTYESLQILKRFKTPFVVVANKIDRIGGWASQKDMPFAATFKKQSPDVQGRLETKLYEVIGELYNQGFAAERYDRVTNFQKTLGVVPASAVTGEGIPDVLMVLLGLAQKFLEANLQYSAKNPGVGTVLEVKEEKGLGATLDVILYDGTLKKGDTVVIGSLGEPIQTKVRALLKPRELSEIRYESKFKQVSEVTAAAGVKISAPGLDGALAGSPIRVATEETLGEIVAQVKSEIDEVRIDTGSVGVMIKADTLGSLEALVHEFQKDEVPIRKAEVGDISHRDAVEASTVEDPLYSVLIGFNVKVHPDARDFLQESTVKVFTSDVIYRLVEDYQKYVKEQQELAEKKIFETIIRPGKFKILPGCVFRQSKPAVVGVRVLGGVVRTNADVMLENGNVVGKIKGLQSEGENIPSAKVGKEVAMAIEGATVGRQIKEEDVLYINVPERHAKVLEHEIYDSLSTDEKETLDIFLTLKRKNNPFWAK.

One can recognise a tr-type G domain in the interval 13–229 (LRTPIVCVMG…LLGLAQKFLE (217 aa)). The segment at 22–29 (GHVDHGKT) is G1. Residue 22-29 (GHVDHGKT) participates in GTP binding. The segment at 47 to 51 (AITQH) is G2. Residues 84 to 87 (DTPG) are G3. Residues 84-88 (DTPGH) and 138-141 (NKID) each bind GTP. Residues 138-141 (NKID) are G4. Residues 206–208 (SAV) form a G5 region.

This sequence belongs to the TRAFAC class translation factor GTPase superfamily. Classic translation factor GTPase family. IF-2 subfamily.

Its function is as follows. Function in general translation initiation by promoting the binding of the formylmethionine-tRNA to ribosomes. Seems to function along with eIF-2. The chain is Probable translation initiation factor IF-2 from Methanosarcina acetivorans (strain ATCC 35395 / DSM 2834 / JCM 12185 / C2A).